The sequence spans 610 residues: UvrABC system protein C (610 aa).

Residues 16–94 (SQPGVYRMYD…IKLYQPRYNV (79 aa)) enclose the GIY-YIG domain. The region spanning 204-239 (DQVLTQLIARMEKASQNLEFEEAARIRDQIQAVRRV) is the UVR domain.

It belongs to the UvrC family. Interacts with UvrB in an incision complex.

The protein resides in the cytoplasm. Its function is as follows. The UvrABC repair system catalyzes the recognition and processing of DNA lesions. UvrC both incises the 5' and 3' sides of the lesion. The N-terminal half is responsible for the 3' incision and the C-terminal half is responsible for the 5' incision. The chain is UvrABC system protein C from Escherichia fergusonii (strain ATCC 35469 / DSM 13698 / CCUG 18766 / IAM 14443 / JCM 21226 / LMG 7866 / NBRC 102419 / NCTC 12128 / CDC 0568-73).